The sequence spans 195 residues: Imidazoleglycerol-phosphate dehydratase (195 aa).

This sequence belongs to the imidazoleglycerol-phosphate dehydratase family.

The protein resides in the cytoplasm. It catalyses the reaction D-erythro-1-(imidazol-4-yl)glycerol 3-phosphate = 3-(imidazol-4-yl)-2-oxopropyl phosphate + H2O. Its pathway is amino-acid biosynthesis; L-histidine biosynthesis; L-histidine from 5-phospho-alpha-D-ribose 1-diphosphate: step 6/9. The chain is Imidazoleglycerol-phosphate dehydratase from Roseobacter denitrificans (strain ATCC 33942 / OCh 114) (Erythrobacter sp. (strain OCh 114)).